The following is a 290-amino-acid chain: 4-diphosphocytidyl-2-C-methyl-D-erythritol kinase (290 aa).

Lys-13 is an active-site residue. An ATP-binding site is contributed by 96-106 (PMGGGIGGGSS). The active site involves Asp-138.

Belongs to the GHMP kinase family. IspE subfamily.

It catalyses the reaction 4-CDP-2-C-methyl-D-erythritol + ATP = 4-CDP-2-C-methyl-D-erythritol 2-phosphate + ADP + H(+). Its pathway is isoprenoid biosynthesis; isopentenyl diphosphate biosynthesis via DXP pathway; isopentenyl diphosphate from 1-deoxy-D-xylulose 5-phosphate: step 3/6. Catalyzes the phosphorylation of the position 2 hydroxy group of 4-diphosphocytidyl-2C-methyl-D-erythritol. The sequence is that of 4-diphosphocytidyl-2-C-methyl-D-erythritol kinase from Vibrio vulnificus (strain CMCP6).